The following is an 86-amino-acid chain: Large ribosomal subunit protein bL27 (86 aa).

Positions 1 to 10 (MAQKKGGGST) are enriched in gly residues. The segment at 1–21 (MAQKKGGGSTRNGRDSESKRL) is disordered.

Belongs to the bacterial ribosomal protein bL27 family.

The polypeptide is Large ribosomal subunit protein bL27 (Bordetella petrii (strain ATCC BAA-461 / DSM 12804 / CCUG 43448)).